The chain runs to 193 residues: MFFRILALLPLVFLVTAHSLVSRSDVVVPVCNAISNMNTTAIALQNACTNFEAQPTNDMAMPIMKFGFALEGEISSGINVCPSDVLSSGDTEILFNALKDLYDTIQKLVSSILKLKDAIIAAGYEAQSCFAVEMMATSMTTFMDKVYACSANEYKGPLDEMRSGVLTMMAQANFSYCGTVSPRGSSKISGVEI.

Positions 1-17 (MFFRILALLPLVFLVTA) are cleaved as a signal peptide. 2 N-linked (GlcNAc...) asparagine glycosylation sites follow: Asn38 and Asn173.

This sequence belongs to the cell wall mannoprotein 1 family. In terms of processing, galactomannoprotein, glycosylated.

Its subcellular location is the secreted. It is found in the cell wall. Constitutive protein of the cell wall. This Armillaria ostoyae (Armillaria root rot fungus) protein is Cell wall galactomannoprotein.